The primary structure comprises 220 residues: HTH-type transcriptional repressor KstR (220 aa).

Residues 36–96 (RERRKRILDA…SALGREFSRI (61 aa)) form the HTH tetR-type domain. Positions 59 to 78 (QMRAVADRADVAVGTLYRYF) form a DNA-binding region, H-T-H motif.

As to quaternary structure, homodimer.

Its function is as follows. Controls the expression of genes used for utilizing diverse lipids as energy sources. The sequence is that of HTH-type transcriptional repressor KstR (kstR) from Mycobacterium tuberculosis (strain ATCC 25618 / H37Rv).